The chain runs to 597 residues: Probable translation initiation factor IF-2 (597 aa).

One can recognise a tr-type G domain in the interval 10 to 226 (LRTPIVAVLG…LMGLSQRFMK (217 aa)). The segment at 19-26 (GHVDHGKT) is G1. 19-26 (GHVDHGKT) is a binding site for GTP. The interval 44–48 (AITQH) is G2. The tract at residues 81 to 84 (DTPG) is G3. Residues 81-85 (DTPGH) and 135-138 (NKVD) contribute to the GTP site. Residues 135 to 138 (NKVD) are G4. The interval 203–205 (SAI) is G5.

The protein belongs to the TRAFAC class translation factor GTPase superfamily. Classic translation factor GTPase family. IF-2 subfamily.

Function in general translation initiation by promoting the binding of the formylmethionine-tRNA to ribosomes. Seems to function along with eIF-2. In Halorubrum lacusprofundi (strain ATCC 49239 / DSM 5036 / JCM 8891 / ACAM 34), this protein is Probable translation initiation factor IF-2.